The sequence spans 354 residues: MGFLSDHPHTAITETIFRIVSSRDYTLEVELAPLIQLIKADHNDYNYTVNQEEAARALRKKIKYGNRLQQSRTLDLLDLFISQGVKFTVMYNDDKLLQRLRGMATNSENSGSGEKYEPRIIKKCAAYAISWLNYITQNNLENARAYSGLYQLGQTVKQRYSKSSRSRRSGGGSGGRSNFMDDSADDTLYQSNSLTSADRLYRIPQINMNKEAPRIRLIISDALASAVSLQNSLIGLPKGKFSTDDEEATSKFIQARAIRRKVLRYLQLVTEGEFLGSLIHANDELVAALTAYDDRSAQDDSSDESDHGSYDDGIYDENEQDNSRYIDSESSEEESLSSYQPSTISNPFGDHNKI.

The VHS domain maps to 15 to 161 (TIFRIVSSRD…LGQTVKQRYS (147 aa)). Disordered stretches follow at residues 160-184 (YSKS…DDSA) and 296-354 (SAQD…HNKI). Residues 296-310 (SAQDDSSDESDHGSY) are compositionally biased toward basic and acidic residues.

The protein belongs to the LSB5 family. Interacts with SLA1 and LAS17.

It localises to the cytoplasm. The protein localises to the cell cortex. It is found in the cytoskeleton. Essential for the organization of the actin cytoskeleton, fluid phase endocytosis and vesicle trafficking, together with YSC84. The polypeptide is LAS seventeen-binding protein 5 (LSB5) (Saccharomyces cerevisiae (strain ATCC 204508 / S288c) (Baker's yeast)).